Consider the following 750-residue polypeptide: Probable methylmalonyl-CoA mutase large subunit (750 aa).

6 residues coordinate (R)-methylmalonyl-CoA: Y91, M94, T101, R103, Y105, and S130. Residues F133 and A155 each contribute to the cob(II)alamin site. (R)-methylmalonyl-CoA is bound by residues T211 and Q213. V222 and R223 together coordinate cob(II)alamin. (R)-methylmalonyl-CoA-binding residues include R223, H260, R299, and S301. G349, E386, A389, G628, H629, D630, R631, S674, L676, G705, and T728 together coordinate cob(II)alamin. One can recognise a B12-binding domain in the interval 616 to 748 (RPRILIAKMG…HRLAERLGYT (133 aa)).

It belongs to the methylmalonyl-CoA mutase family. Heterodimer of an alpha and a beta chain. The cofactor is adenosylcob(III)alamin.

The catalysed reaction is (R)-methylmalonyl-CoA = succinyl-CoA. Its pathway is metabolic intermediate metabolism; propanoyl-CoA degradation; succinyl-CoA from propanoyl-CoA: step 3/3. Its function is as follows. Catalyzes the isomerization of succinyl-CoA to methylmalonyl-CoA during synthesis of propionate from tricarboxylic acid-cycle intermediates. In Mycobacterium bovis (strain ATCC BAA-935 / AF2122/97), this protein is Probable methylmalonyl-CoA mutase large subunit (mutB).